The primary structure comprises 393 residues: Homoserine O-succinyltransferase (393 aa).

One can recognise an AB hydrolase-1 domain in the interval 62-372 (NAVLVCHALN…PHGHDAFLLD (311 aa)). Residue Ser168 is the Nucleophile of the active site. Residue Arg238 coordinates substrate. Active-site residues include Asp333 and His366. Asp367 contacts substrate.

This sequence belongs to the AB hydrolase superfamily. MetX family. In terms of assembly, homodimer.

Its subcellular location is the cytoplasm. The catalysed reaction is L-homoserine + succinyl-CoA = O-succinyl-L-homoserine + CoA. It participates in amino-acid biosynthesis; L-methionine biosynthesis via de novo pathway; O-succinyl-L-homoserine from L-homoserine: step 1/1. Functionally, transfers a succinyl group from succinyl-CoA to L-homoserine, forming succinyl-L-homoserine. This Cupriavidus taiwanensis (strain DSM 17343 / BCRC 17206 / CCUG 44338 / CIP 107171 / LMG 19424 / R1) (Ralstonia taiwanensis (strain LMG 19424)) protein is Homoserine O-succinyltransferase.